The primary structure comprises 755 residues: uncharacterized protein (755 aa).

The next 9 helical transmembrane spans lie at 46–66 (LGLGVGLASQLILLADMGGLY), 70–90 (LKTIFGAWVGAAIAMAVGTIV), 93–113 (GWGLGLAITGFVLFASGYLAV), 118–138 (GAMVGIVTTFAFLLGAQNVST), 143–163 (FTSLAIGGMWSLILAIFIWPF), 411–431 (IAHLTQIPYGFWIVITLIFVL), 446–466 (LLGTFLGVLVMSIALKLIQDP), 482–502 (ALLRFHYSVAVFFITAFALIL), and 514–534 (ALLSRLVCTLIGSAIALGLAF).

Belongs to the YccS/YhfK family.

The protein localises to the cell membrane. This is an uncharacterized protein from Synechocystis sp. (strain ATCC 27184 / PCC 6803 / Kazusa).